The following is a 340-amino-acid chain: Serpentine receptor class alpha-18 (340 aa).

6 helical membrane-spanning segments follow: residues phenylalanine 29–isoleucine 49, valine 109–leucine 129, phenylalanine 149–valine 169, valine 198–valine 218, isoleucine 249–isoleucine 269, and isoleucine 285–phenylalanine 305.

This sequence belongs to the nematode receptor-like protein sra family.

The protein resides in the membrane. In Caenorhabditis elegans, this protein is Serpentine receptor class alpha-18 (sra-18).